The sequence spans 572 residues: Proline--tRNA ligase (572 aa).

Belongs to the class-II aminoacyl-tRNA synthetase family. ProS type 1 subfamily. As to quaternary structure, homodimer.

The protein localises to the cytoplasm. It carries out the reaction tRNA(Pro) + L-proline + ATP = L-prolyl-tRNA(Pro) + AMP + diphosphate. Functionally, catalyzes the attachment of proline to tRNA(Pro) in a two-step reaction: proline is first activated by ATP to form Pro-AMP and then transferred to the acceptor end of tRNA(Pro). As ProRS can inadvertently accommodate and process non-cognate amino acids such as alanine and cysteine, to avoid such errors it has two additional distinct editing activities against alanine. One activity is designated as 'pretransfer' editing and involves the tRNA(Pro)-independent hydrolysis of activated Ala-AMP. The other activity is designated 'posttransfer' editing and involves deacylation of mischarged Ala-tRNA(Pro). The misacylated Cys-tRNA(Pro) is not edited by ProRS. The protein is Proline--tRNA ligase of Caldicellulosiruptor saccharolyticus (strain ATCC 43494 / DSM 8903 / Tp8T 6331).